The following is a 1473-amino-acid chain: Ovostatin (1473 aa).

Residues 1-36 (MHCFLGREILSFFCLTVRKMWLKFILAILLLHAAAG) form the signal peptide. N-linked (GlcNAc...) asparagine glycans are attached at residues N67, N82, N89, N191, N342, N403, N527, N588, N757, N1141, N1221, N1315, and N1347.

This sequence belongs to the protease inhibitor I39 (alpha-2-macroglobulin) family. Homotetramer, which consists of two pairs of disulfide-linked chains. Lacks the thioester bond found in other members of this family. Post-translationally, glycosylated; contains 56 glucosamine units per subunit.

The protein localises to the secreted. Functionally, is able to inhibit all four classes of proteinases by a unique 'trapping' mechanism. This protein has a peptide stretch, called the 'bait region' which contains specific cleavage sites for different proteinases. When a proteinase cleaves the bait region, a conformational change is induced in the protein which traps the proteinase. The entrapped enzyme remains active against low molecular weight substrates (activity against high molecular weight substrates is greatly reduced). This Gallus gallus (Chicken) protein is Ovostatin.